A 35-amino-acid polypeptide reads, in one-letter code: Thrombin-like enzyme cerastobin (35 aa).

The 35-residue stretch at 1–35 (VIGGAKCNINEHRSIVLLYSSRLFGHTLINKEWVL) folds into the Peptidase S1 domain.

Belongs to the peptidase S1 family. Snake venom subfamily. In terms of assembly, monomer. As to expression, expressed by the venom gland.

Its subcellular location is the secreted. Inhibited by diisopropylfluorophosphate (DFP). In terms of biological role, thrombin-like snake venom serine protease, that cleaves both alpha-chain (FGA) and beta-chain (FGB) of fibrinogen. Partially degrades factor X (F10), and release bradykinin from kininogen (KNG). Potently induces platelet aggregation. Shows a proteolytic activity towards protein constituents of the platelets cytoskeleton. Hydrolyzes actin, actin-binding protein, and P235. Shows a preferential cleavage at Arg-|-Xaa bonds. The protein is Thrombin-like enzyme cerastobin of Cerastes vipera (Sahara sand viper).